The chain runs to 430 residues: Dihydroorotase (430 aa).

Zn(2+) is bound by residues H57 and H59. Residues 59-61 (HLR) and N91 each bind substrate. The Zn(2+) site is built by D151, H178, and H231. Residue N277 participates in substrate binding. Residue D304 participates in Zn(2+) binding. Residue D304 is part of the active site. Substrate is bound by residues H308 and 322 to 323 (PG).

It belongs to the metallo-dependent hydrolases superfamily. DHOase family. Class I DHOase subfamily. Zn(2+) serves as cofactor.

The catalysed reaction is (S)-dihydroorotate + H2O = N-carbamoyl-L-aspartate + H(+). The protein operates within pyrimidine metabolism; UMP biosynthesis via de novo pathway; (S)-dihydroorotate from bicarbonate: step 3/3. Its function is as follows. Catalyzes the reversible cyclization of carbamoyl aspartate to dihydroorotate. The protein is Dihydroorotase of Mycobacterium leprae (strain TN).